The sequence spans 160 residues: MKTLNVLALVLVLLCINASTEWPTHTVCKEENLEIYYKSCDPQQDFAFSIDRCSDVTTHTFDIRAAMVLRQSIKELYAKVDLIINGKTVLSYSETLCGPGLSKLIFCGKKKGEHLYYEGPITLGIKEIPQRDYTITARLTNEDRATVACADFTVKNYLDY.

The first 20 residues, 1-20, serve as a signal peptide directing secretion; that stretch reads MKTLNVLALVLVLLCINAST. Intrachain disulfides connect Cys-28–Cys-53, Cys-40–Cys-149, and Cys-97–Cys-107.

M-shaped tetramer of two CD180-LY86 heterodimers. In terms of tissue distribution, detected in the macrophage-like 10.4 cells.

The protein resides in the secreted. Its subcellular location is the extracellular space. Functionally, may cooperate with CD180 and TLR4 to mediate the innate immune response to bacterial lipopolysaccharide (LPS) and cytokine production. Important for efficient CD180 cell surface expression. This is Lymphocyte antigen 86 (LY86) from Gallus gallus (Chicken).